Here is a 68-residue protein sequence, read N- to C-terminus: Bacteriocin lactococcin-B (68 aa).

A propeptide spanning residues M1–G21 is cleaved from the precursor.

It localises to the secreted. Its function is as follows. Kills Lactococci by dissipating the membrane potential of the cells. The chain is Bacteriocin lactococcin-B (lcnB) from Lactococcus lactis subsp. cremoris (Streptococcus cremoris).